The sequence spans 54 residues: Ovomucoid (54 aa).

The Kazal-like domain occupies 4-54 (VDCSDYPKPVCTLEDMPLCGSDNITYHNKCYFCNAVAHSNGTLTFSHFGKC). Cystine bridges form between Cys6/Cys36, Cys14/Cys33, and Cys22/Cys54. Residue Asn43 is glycosylated (N-linked (GlcNAc...) asparagine).

It localises to the secreted. This chain is Ovomucoid, found in Carpococcyx renauldi (Coral-billed ground-cuckoo).